The chain runs to 1133 residues: Sterol regulatory element-binding protein 2 (1133 aa).

A transcriptional activation (acidic) region spans residues 1–50 (MDENSELGGLETMETLTELGDELTLGDIDEMLQFVSNQVGEFSDLFSEQL). Residues 1–473 (MDENSELGGL…VALGMVDRSR (473 aa)) are Cytoplasmic-facing. A compositionally biased stretch (gly residues) spans 56-65 (GGGGGSGSGG). Residues 56–136 (GGGGGSGSGG…PQPQPQPPAQ (81 aa)) form a disordered region. A compositionally biased stretch (low complexity) spans 92–109 (PLSTFSPSSTSPQAPALQ). The span at 114–134 (PTPPRATPVLQPRPQPQPQPP) shows a compositional bias: pro residues. Residues 229 to 483 (QQVPVLVQPQ…ILLCVLTFLG (255 aa)) form an interaction with LMNA region. In terms of domain architecture, bHLH spans 322–372 (ERRTTHNIIEKRYRSSINDKIIELKDLVMGTDAKMHKSGVLRKAIDYIKYL). Positions 372–393 (LQQVNHKLRQENMVLKLANQKN) are leucine-zipper. K456 is covalently cross-linked (Glycyl lysine isopeptide (Lys-Gly) (interchain with G-Cter in SUMO2)). The chain crosses the membrane as a helical span at residues 474 to 494 (ILLCVLTFLGLSFNPLTSLLQ). At 495–525 (WGGAHNPDQHPYSGSGRNVLSLESGSGGWFD) the chain is on the lumenal side. The helical transmembrane segment at 526 to 546 (WMMPTLLLWLLNGVIVLSVFV) threads the bilayer. Over 547–1133 (KLLVHGEPVI…LGGGTAIAAS (587 aa)) the chain is Cytoplasmic. A Phosphoserine modification is found at S1090.

Belongs to the SREBP family. As to quaternary structure, homodimer; efficient DNA binding of the soluble transcription factor fragment requires dimerization with another bHLH protein. Interacts with LMNA. In terms of assembly, forms a tight complex with SCAP, the SCAP-SREBP complex, in the endoplasmic reticulum membrane and the Golgi apparatus. Interacts with PAQR3; the interaction anchors the SCAP-SREBP complex to the Golgi apparatus in low cholesterol conditions. Interacts (via C-terminal domain) with RNF139. In terms of processing, processed in the Golgi apparatus, releasing the protein from the membrane. At low cholesterol the SCAP-SREBP complex is recruited into COPII vesicles for export from the endoplasmic reticulum. In the Golgi, complex SREBPs are cleaved sequentially by site-1 (MBTPS1, S1P) and site-2 (MBTPS2, S2P) proteases. The first cleavage by site-1 protease occurs within the luminal loop, the second cleavage by site-2 protease occurs within the first transmembrane domain, releasing the transcription factor from the Golgi membrane. Apoptosis triggers cleavage by the cysteine proteases caspase-3 and caspase-7. Cleavage and activation is induced by mediated cholesterol efflux. Phosphorylated by AMPK, leading to suppress protein processing and nuclear translocation, and repress target gene expression. Post-translationally, SCAP-free SREBF2 is ubiquitinated by the BCR(ARMC5) complex, leading to its degradation. In terms of processing, ubiquitinated; the nuclear form has a rapid turnover and is rapidly ubiquitinated and degraded by the proteasome in the nucleus.

It localises to the endoplasmic reticulum membrane. It is found in the golgi apparatus membrane. The protein localises to the cytoplasmic vesicle. Its subcellular location is the COPII-coated vesicle membrane. The protein resides in the nucleus. With respect to regulation, activation by cleavage is down-regulated upon activation of SIRT3-dependent PRKAA1/AMPK-alpha signaling cascade which leads to inhibition of ATP-consuming lipogenesis to restore cellular energy balance. In terms of biological role, precursor of the transcription factor form (Processed sterol regulatory element-binding protein 2), which is embedded in the endoplasmic reticulum membrane. Low sterol concentrations promote processing of this form, releasing the transcription factor form that translocates into the nucleus and activates transcription of genes involved in cholesterol biosynthesis. Key transcription factor that regulates expression of genes involved in cholesterol biosynthesis. Binds to the sterol regulatory element 1 (SRE-1) (5'-ATCACCCCAC-3'). Has dual sequence specificity binding to both an E-box motif (5'-ATCACGTGA-3') and to SRE-1 (5'-ATCACCCCAC-3'). Regulates transcription of genes related to cholesterol synthesis pathway. Regulates hepatic lipogenesis. This chain is Sterol regulatory element-binding protein 2, found in Rattus norvegicus (Rat).